The following is a 264-amino-acid chain: Undecaprenyl-diphosphatase (264 aa).

8 helical membrane-spanning segments follow: residues 1-21 (MDIV…FLPI), 39-59 (QGLA…VFYF), 83-103 (STLV…GLAF), 113-133 (SGIV…LADK), 143-163 (VTIK…IPGV), 181-201 (VGSA…AGGL), 220-240 (LAAL…MSII), and 244-264 (SMTP…FIFV).

Belongs to the UppP family.

The protein localises to the cell inner membrane. It catalyses the reaction di-trans,octa-cis-undecaprenyl diphosphate + H2O = di-trans,octa-cis-undecaprenyl phosphate + phosphate + H(+). In terms of biological role, catalyzes the dephosphorylation of undecaprenyl diphosphate (UPP). Confers resistance to bacitracin. This chain is Undecaprenyl-diphosphatase, found in Campylobacter curvus (strain 525.92).